Consider the following 213-residue polypeptide: 3-isopropylmalate dehydratase small subunit (213 aa).

This sequence belongs to the LeuD family. LeuD type 1 subfamily. As to quaternary structure, heterodimer of LeuC and LeuD.

It carries out the reaction (2R,3S)-3-isopropylmalate = (2S)-2-isopropylmalate. The protein operates within amino-acid biosynthesis; L-leucine biosynthesis; L-leucine from 3-methyl-2-oxobutanoate: step 2/4. Functionally, catalyzes the isomerization between 2-isopropylmalate and 3-isopropylmalate, via the formation of 2-isopropylmaleate. The sequence is that of 3-isopropylmalate dehydratase small subunit from Aromatoleum aromaticum (strain DSM 19018 / LMG 30748 / EbN1) (Azoarcus sp. (strain EbN1)).